A 373-amino-acid chain; its full sequence is Flagellar P-ring protein (373 aa).

A signal peptide spans 1 to 26; it reads MKLFFRIVTLVAVVAMSLADMAPAWA.

Belongs to the FlgI family. As to quaternary structure, the basal body constitutes a major portion of the flagellar organelle and consists of four rings (L,P,S, and M) mounted on a central rod.

It is found in the periplasm. The protein resides in the bacterial flagellum basal body. In terms of biological role, assembles around the rod to form the L-ring and probably protects the motor/basal body from shearing forces during rotation. This Rhizobium etli (strain ATCC 51251 / DSM 11541 / JCM 21823 / NBRC 15573 / CFN 42) protein is Flagellar P-ring protein.